A 689-amino-acid polypeptide reads, in one-letter code: Elongation factor G (689 aa).

The region spanning 9 to 283 (AKFRNIGIMA…AIVEFMPSPL (275 aa)) is the tr-type G domain. GTP is bound by residues 18–25 (AHIDAGKT), 82–86 (DTPGH), and 136–139 (NKMD).

This sequence belongs to the TRAFAC class translation factor GTPase superfamily. Classic translation factor GTPase family. EF-G/EF-2 subfamily.

Its subcellular location is the cytoplasm. In terms of biological role, catalyzes the GTP-dependent ribosomal translocation step during translation elongation. During this step, the ribosome changes from the pre-translocational (PRE) to the post-translocational (POST) state as the newly formed A-site-bound peptidyl-tRNA and P-site-bound deacylated tRNA move to the P and E sites, respectively. Catalyzes the coordinated movement of the two tRNA molecules, the mRNA and conformational changes in the ribosome. The protein is Elongation factor G of Clostridium botulinum (strain Kyoto / Type A2).